The sequence spans 179 residues: Large ribosomal subunit protein uL6 (179 aa).

Belongs to the universal ribosomal protein uL6 family. In terms of assembly, part of the 50S ribosomal subunit.

Its function is as follows. This protein binds to the 23S rRNA, and is important in its secondary structure. It is located near the subunit interface in the base of the L7/L12 stalk, and near the tRNA binding site of the peptidyltransferase center. The protein is Large ribosomal subunit protein uL6 of Prochlorococcus marinus (strain SARG / CCMP1375 / SS120).